Consider the following 417-residue polypeptide: UDP-N-acetylglucosamine 1-carboxyvinyltransferase (417 aa).

22–23 contributes to the phosphoenolpyruvate binding site; sequence KN. Arg93 serves as a coordination point for UDP-N-acetyl-alpha-D-glucosamine. The active-site Proton donor is the Cys117. Cys117 carries the post-translational modification 2-(S-cysteinyl)pyruvic acid O-phosphothioketal. UDP-N-acetyl-alpha-D-glucosamine is bound by residues 122 to 126, Asp304, and Ile326; that span reads RPVDQ.

It belongs to the EPSP synthase family. MurA subfamily.

The protein resides in the cytoplasm. It catalyses the reaction phosphoenolpyruvate + UDP-N-acetyl-alpha-D-glucosamine = UDP-N-acetyl-3-O-(1-carboxyvinyl)-alpha-D-glucosamine + phosphate. The protein operates within cell wall biogenesis; peptidoglycan biosynthesis. Functionally, cell wall formation. Adds enolpyruvyl to UDP-N-acetylglucosamine. The protein is UDP-N-acetylglucosamine 1-carboxyvinyltransferase of Neisseria meningitidis serogroup A / serotype 4A (strain DSM 15465 / Z2491).